The sequence spans 138 residues: Small ribosomal subunit protein uS11c (138 aa).

Positions 1 to 23 (MAKPIQRIGSRRNGPIGSRKNGR) are disordered.

It belongs to the universal ribosomal protein uS11 family. As to quaternary structure, part of the 30S ribosomal subunit.

The protein resides in the plastid. The protein localises to the chloroplast. This is Small ribosomal subunit protein uS11c from Platanus occidentalis (Sycamore).